Reading from the N-terminus, the 396-residue chain is E3 ubiquitin-protein transferase MAEA (396 aa).

One can recognise a LisH domain in the interval 121–153; the sequence is KKKRMDRMMVEHLLRCGYYNTAVKLARQSEIED. The CTLH domain maps to 159–216; it reads MFLTAKEVEESLERQETMTCLAWCHDNKSRLRKMKSCLEFSLRIQEFIELIRQNKRLD. An RING-Gid-type zinc finger spans residues 314 to 381; it reads CPVCSKSLNK…QDDKVVCPRT (68 aa).

As to quaternary structure, identified in the CTLH complex that contains at least MAEA, RMND5A, GID8, WDR26, and RANBP9 and/or RANBP10 as the catalytic core. Interacts with F-actin.

It localises to the nucleus matrix. Its subcellular location is the cell membrane. It is found in the cytoplasm. The protein resides in the cytoskeleton. The enzyme catalyses S-ubiquitinyl-[E2 ubiquitin-conjugating enzyme]-L-cysteine + [acceptor protein]-L-lysine = [E2 ubiquitin-conjugating enzyme]-L-cysteine + N(6)-ubiquitinyl-[acceptor protein]-L-lysine.. In terms of biological role, core component of the CTLH E3 ubiquitin-protein ligase complex that selectively accepts ubiquitin from UBE2H and mediates ubiquitination and subsequent proteasomal degradation of the transcription factor HBP1. MAEA and RMND5A are both required for catalytic activity of the CTLH E3 ubiquitin-protein ligase complex. MAEA is required for normal cell proliferation. The CTLH E3 ubiquitin-protein ligase complex is not required for the degradation of enzymes involved in gluconeogenesis, such as FBP1. Plays a role in erythroblast maturation and in the development of mature macrophages. Mediates the attachment of erythroid cell to mature macrophages; this MAEA-mediated contact inhibits erythroid cell apoptosis. Participates in erythroblastic island formation, which is the functional unit of definitive erythropoiesis. Associates with F-actin to regulate actin distribution in erythroblasts and macrophages. May contribute to nuclear architecture and cells division events. The sequence is that of E3 ubiquitin-protein transferase MAEA (maea) from Xenopus laevis (African clawed frog).